The primary structure comprises 300 residues: Haloalkane dehalogenase (300 aa).

Positions 32–155 (AIVFQHGNPT…PAVRGVFQGF (124 aa)) constitute an AB hydrolase-1 domain. Asp-109 functions as the Nucleophile in the catalytic mechanism. Residue Glu-133 is the Proton donor of the active site. His-273 serves as the catalytic Proton acceptor.

Belongs to the haloalkane dehalogenase family. Type 2 subfamily. As to quaternary structure, monomer.

It carries out the reaction 1-haloalkane + H2O = a halide anion + a primary alcohol + H(+). Its function is as follows. Catalyzes hydrolytic cleavage of carbon-halogen bonds in halogenated aliphatic compounds, leading to the formation of the corresponding primary alcohols, halide ions and protons. The polypeptide is Haloalkane dehalogenase (Mycobacterium bovis (strain BCG / Pasteur 1173P2)).